The primary structure comprises 73 residues: Structural DNA-binding protein p10 (73 aa).

Positions 1-35 (MPTKAGTKSTAHKKTTTKGPSKSPKGKTHATALHQ) are disordered.

It belongs to the asfivirus P10 family.

The protein resides in the virion. Functionally, may play a role in genome packaging through direct interaction with viral DNA. Binds to ssDNA and dsDNA with the same apparent affinity in vitro. This is Structural DNA-binding protein p10 from African swine fever virus (isolate Tick/Malawi/Lil 20-1/1983) (ASFV).